A 62-amino-acid polypeptide reads, in one-letter code: Large ribosomal subunit protein uL30 (62 aa).

Belongs to the universal ribosomal protein uL30 family. As to quaternary structure, part of the 50S ribosomal subunit.

The protein is Large ribosomal subunit protein uL30 of Alkalilimnicola ehrlichii (strain ATCC BAA-1101 / DSM 17681 / MLHE-1).